The following is a 142-amino-acid chain: Translation initiation factor 2 subunit beta (142 aa).

It belongs to the eIF-2-beta/eIF-5 family. In terms of assembly, heterotrimer composed of an alpha, a beta and a gamma chain.

In terms of biological role, eIF-2 functions in the early steps of protein synthesis by forming a ternary complex with GTP and initiator tRNA. The polypeptide is Translation initiation factor 2 subunit beta (Thermococcus kodakarensis (strain ATCC BAA-918 / JCM 12380 / KOD1) (Pyrococcus kodakaraensis (strain KOD1))).